The primary structure comprises 362 residues: Protein-glutamate methylesterase/protein-glutamine glutaminase (362 aa).

A Response regulatory domain is found at R10 to E127. Position 61 is a 4-aspartylphosphate (D61). Positions R173–G362 constitute a CheB-type methylesterase domain. Residues S184, H211, and D304 contribute to the active site.

It belongs to the CheB family. Post-translationally, phosphorylated by CheA. Phosphorylation of the N-terminal regulatory domain activates the methylesterase activity.

It localises to the cytoplasm. The enzyme catalyses [protein]-L-glutamate 5-O-methyl ester + H2O = L-glutamyl-[protein] + methanol + H(+). The catalysed reaction is L-glutaminyl-[protein] + H2O = L-glutamyl-[protein] + NH4(+). In terms of biological role, involved in chemotaxis. Part of a chemotaxis signal transduction system that modulates chemotaxis in response to various stimuli. Catalyzes the demethylation of specific methylglutamate residues introduced into the chemoreceptors (methyl-accepting chemotaxis proteins or MCP) by CheR. Also mediates the irreversible deamidation of specific glutamine residues to glutamic acid. The sequence is that of Protein-glutamate methylesterase/protein-glutamine glutaminase from Symbiobacterium thermophilum (strain DSM 24528 / JCM 14929 / IAM 14863 / T).